The following is a 135-amino-acid chain: UPF0102 protein Aave_0630 (135 aa).

Positions 1–21 are disordered; that stretch reads MGILEKKTAGPGGAARKTTTR.

This sequence belongs to the UPF0102 family.

The sequence is that of UPF0102 protein Aave_0630 from Paracidovorax citrulli (strain AAC00-1) (Acidovorax citrulli).